We begin with the raw amino-acid sequence, 302 residues long: uncharacterized protein (302 aa).

The region spanning Met1–Thr60 is the HTH lysR-type domain. Positions Phe20 to Thr40 form a DNA-binding region, H-T-H motif.

Belongs to the LysR transcriptional regulatory family.

This is an uncharacterized protein from Escherichia coli (strain K12).